Consider the following 577-residue polypeptide: Arginine--tRNA ligase (577 aa).

The short motif at 122 to 132 (PNVAKEMHVGH) is the 'HIGH' region element.

This sequence belongs to the class-I aminoacyl-tRNA synthetase family. Monomer.

The protein localises to the cytoplasm. It catalyses the reaction tRNA(Arg) + L-arginine + ATP = L-arginyl-tRNA(Arg) + AMP + diphosphate. This chain is Arginine--tRNA ligase, found in Escherichia coli O8 (strain IAI1).